A 347-amino-acid chain; its full sequence is NADH-quinone oxidoreductase subunit H (347 aa).

A run of 9 helical transmembrane segments spans residues 13-33 (LIIA…VAYL), 50-70 (PNVV…KFVF), 82-102 (GVFL…WAVI), 115-135 (VGIL…IMGG), 161-181 (IGFV…TDIV), 198-218 (FLDW…ISAL), 248-268 (FLLF…LMTV), 286-306 (VPGI…FAMV), and 325-345 (VFLP…KVFG).

This sequence belongs to the complex I subunit 1 family. In terms of assembly, NDH-1 is composed of 14 different subunits. Subunits NuoA, H, J, K, L, M, N constitute the membrane sector of the complex.

It localises to the cell inner membrane. The catalysed reaction is a quinone + NADH + 5 H(+)(in) = a quinol + NAD(+) + 4 H(+)(out). NDH-1 shuttles electrons from NADH, via FMN and iron-sulfur (Fe-S) centers, to quinones in the respiratory chain. The immediate electron acceptor for the enzyme in this species is believed to be ubiquinone. Couples the redox reaction to proton translocation (for every two electrons transferred, four hydrogen ions are translocated across the cytoplasmic membrane), and thus conserves the redox energy in a proton gradient. This subunit may bind ubiquinone. The chain is NADH-quinone oxidoreductase subunit H from Brucella abortus (strain 2308).